A 377-amino-acid polypeptide reads, in one-letter code: Serine/threonine-protein phosphatase PP2A-2 catalytic subunit (377 aa).

The tract at residues 1–66 is disordered; the sequence is MDMEIDDPMH…SGIADHKSSK (66 aa). A compositionally biased stretch (basic and acidic residues) spans 28 to 40; the sequence is DDGKNNTKARSND. Phosphoserine is present on Ser38. At Thr43 the chain carries Phosphothreonine. 4 residues coordinate Mn(2+): Asp125, His127, Asp153, and Asn185. Residue His186 is the Proton donor of the active site. Mn(2+) contacts are provided by His235 and His309. Leucine methyl ester is present on Leu377.

The protein belongs to the PPP phosphatase family. PP-2A subfamily. Inactivated in a complex with phosphatase methylesterase PPE1 (PP2Ai). Interacts with phosphatase 2A activator RRD2, which can reactivate PP2Ai by dissociating the catalytic subunit from the complex. Interacts with TAP42. Mn(2+) is required as a cofactor. Post-translationally, reversibly methyl esterified on Leu-377 by leucine carboxyl methyltransferase 1 (PPM1) and protein phosphatase methylesterase 1 (PPE1). Carboxyl methylation influences the affinity of the catalytic subunit for the different regulatory subunits, thereby modulating the PP2A holoenzyme's substrate specificity, enzyme activity and cellular localization.

The enzyme catalyses O-phospho-L-seryl-[protein] + H2O = L-seryl-[protein] + phosphate. It carries out the reaction O-phospho-L-threonyl-[protein] + H2O = L-threonyl-[protein] + phosphate. Exact function not known, phosphatase 2A performs an essential cellular function. In Saccharomyces cerevisiae (strain ATCC 204508 / S288c) (Baker's yeast), this protein is Serine/threonine-protein phosphatase PP2A-2 catalytic subunit (PPH22).